A 699-amino-acid polypeptide reads, in one-letter code: Glutamine--fructose-6-phosphate aminotransferase [isomerizing] (699 aa).

Cys-2 acts as the Nucleophile in catalysis. Residues 2 to 303 (CGIFGYANFS…DNDIVHISNG (302 aa)) enclose the Glutamine amidotransferase type-2 domain. SIS domains lie at 377-516 (HVSG…QNLV) and 544-689 (SVKS…ADFP).

It carries out the reaction D-fructose 6-phosphate + L-glutamine = D-glucosamine 6-phosphate + L-glutamate. The protein operates within nucleotide-sugar biosynthesis; UDP-N-acetyl-alpha-D-glucosamine biosynthesis; alpha-D-glucosamine 6-phosphate from D-fructose 6-phosphate: step 1/1. Its function is as follows. Involved in amino sugar synthesis (formation of chitin, supplies the amino sugars of asparagine-linked oligosaccharides of glycoproteins). The chain is Glutamine--fructose-6-phosphate aminotransferase [isomerizing] (GFA1) from Encephalitozoon cuniculi (strain GB-M1) (Microsporidian parasite).